A 3795-amino-acid chain; its full sequence is NBPF family member NBPF10 (3795 aa).

A coiled-coil region spans residues 75–119 (RQFKEEKLAEQLKQAEELRQYKVLVHSQERELTQLREKLREGRDA). Residues 161 to 200 (KLSPENDEDEDEDVQVEEAEKVLESSAPREVQKAEESKVP) form a disordered region. Acidic residues predominate over residues 165-177 (ENDEDEDEDVQVE). The 95-residue stretch at 165 to 259 (ENDEDEDEDV…ECQDALNILP (95 aa)) folds into the Olduvai 1 domain. Residues 190–200 (EVQKAEESKVP) are compositionally biased toward basic and acidic residues. The stretch at 346–390 (RQFKEEKLAEQLKQAEELRQYKVLVHAQERELTQLKEKLREGRDA) forms a coiled coil. 41 Olduvai domains span residues 436-528 (ENDN…HIIP), 529-600 (ENES…VDIG), 601-692 (RHRW…PSCP), 695-750 (SREL…LDVD), 751-843 (RIKK…RSKK), 844-936 (ERRR…PSCP), 939-994 (SREL…LDVD), 995-1087 (RIKK…RSKK), 1088-1180 (ERRR…PSCP), 1183-1238 (SREL…LDVD), 1239-1331 (RIKK…RSKK), 1332-1424 (ERRR…PSCP), 1427-1482 (SREL…LDVD), 1483-1575 (RIKK…RSKK), 1576-1668 (ERRR…PSCP), 1671-1726 (SREL…LDVD), 1727-1819 (RIKK…RSKK), 1820-1912 (ERRR…PSCP), 1915-1970 (SREL…LDVD), 1971-2063 (RIKK…RSKK), 2064-2156 (ERRR…PSCP), 2159-2214 (SREL…LDVD), 2215-2307 (RIKK…RSKK), 2308-2400 (ERRR…PSCP), 2403-2458 (SREL…LDVD), 2459-2551 (RIKK…RSKK), 2552-2644 (ERRR…PSCP), 2647-2702 (SREL…LDVD), 2703-2795 (RIKK…RSKK), 2796-2888 (ERRR…PSCP), 2891-2946 (SREL…LDVD), 2947-3039 (RIKK…RSKK), 3040-3132 (ERRR…PSCP), 3135-3190 (SREL…LDVD), 3191-3283 (RIKK…RSKK), 3284-3376 (ERRR…PSCP), 3379-3434 (SREL…LDVD), 3435-3527 (RIKK…RSKK), 3528-3620 (ERRR…PSCP), 3623-3696 (SREL…RSKK), and 3697-3795 (ERRR…IFPQ). Disordered stretches follow at residues 451-475 (EKVQKSSAPREMQKAEEKEVPEDSL) and 520-566 (WEDA…EGYS). 2 stretches are compositionally biased toward acidic residues: residues 530 to 539 (NESDDEEEEE) and 550 to 562 (ESEEEEVPQESWD). Positions 830–868 (KGKGKKRRGRRSKKERRRGRKEGEEDQNPPCPRLSRELL) are disordered. Residues 831-849 (GKGKKRRGRRSKKERRRGR) are compositionally biased toward basic residues. Positions 1073–1109 (KKGKGKKRRGRRSKKERRRGRKEGEEDQNPPCPRLSR) are disordered. Positions 1075–1093 (GKGKKRRGRRSKKERRRGR) are enriched in basic residues. 2 disordered regions span residues 1242-1261 (KDEEEEEDQDPPCPRLSREL) and 1318-1353 (KGKGKKRRGRRSKKERRRGRKEGEEDQNPPCPRLSR). Over residues 1319–1337 (GKGKKRRGRRSKKERRRGR) the composition is skewed to basic residues. The tract at residues 1562–1600 (KGKGKKRRGRRSKKERRRGRKEGEEDQNPPCPRLSRELL) is disordered. The span at 1563-1581 (GKGKKRRGRRSKKERRRGR) shows a compositional bias: basic residues. The interval 1806 to 1844 (KGKGKKRRGRRSKKERRRGRKEGEEDQNPPCPRLSRELL) is disordered. Residues 1807–1825 (GKGKKRRGRRSKKERRRGR) are compositionally biased toward basic residues. Residues 2050–2088 (KGKGKKRRGRRSKKERRRGRKEGEEDQNPPCPRLSRELL) are disordered. A compositionally biased stretch (basic residues) spans 2051–2069 (GKGKKRRGRRSKKERRRGR). The tract at residues 2294 to 2332 (KGKGKKRRGRRSKKERRRGRKEGEEDQNPPCPRLSRELL) is disordered. Residues 2295 to 2313 (GKGKKRRGRRSKKERRRGR) show a composition bias toward basic residues. A disordered region spans residues 2538–2576 (KGKGKKRRGRRSKKERRRGRKEGEEDQNPPCPRLSRELL). Over residues 2539-2557 (GKGKKRRGRRSKKERRRGR) the composition is skewed to basic residues. Positions 2782–2820 (KGKGKKRRGRRSKKERRRGRKEGEEDQNPPCPRLSRELL) are disordered. The segment covering 2783 to 2801 (GKGKKRRGRRSKKERRRGR) has biased composition (basic residues). The tract at residues 3026–3064 (KGKGKKRRGRRSKKERRRGRKEGEEDQNPPCPRLSRELL) is disordered. Residues 3027–3045 (GKGKKRRGRRSKKERRRGR) are compositionally biased toward basic residues. Disordered regions lie at residues 3194–3213 (KDEEEEEDQDPPCPRLSREL) and 3270–3308 (KGKGKKRRGRRSKKERRRGRKEGEEDQNPPCPRLSRELL). A compositionally biased stretch (basic residues) spans 3271–3289 (GKGKKRRGRRSKKERRRGR). Disordered stretches follow at residues 3514-3552 (KGKGKKRRGRRSKKERRRGRKEGEEDQNPPCPRLSRELL) and 3684-3716 (GKGKKRRGRRSKKERRRGRKEGEEDQNPPCPRL). 2 stretches are compositionally biased toward basic residues: residues 3515–3533 (GKGKKRRGRRSKKERRRGR) and 3684–3702 (GKGKKRRGRRSKKERRRGR).

The protein belongs to the NBPF family.

Its subcellular location is the cytoplasm. The polypeptide is NBPF family member NBPF10 (Homo sapiens (Human)).